We begin with the raw amino-acid sequence, 361 residues long: Peptide chain release factor 1 (361 aa).

Position 237 is an N5-methylglutamine (Gln-237). The span at 286–296 (EKRRSAEESTR) shows a compositional bias: basic and acidic residues. Positions 286 to 305 (EKRRSAEESTRRNLVSSGDR) are disordered.

Belongs to the prokaryotic/mitochondrial release factor family. In terms of processing, methylated by PrmC. Methylation increases the termination efficiency of RF1.

The protein resides in the cytoplasm. Its function is as follows. Peptide chain release factor 1 directs the termination of translation in response to the peptide chain termination codons UAG and UAA. The sequence is that of Peptide chain release factor 1 from Shewanella pealeana (strain ATCC 700345 / ANG-SQ1).